Here is a 364-residue protein sequence, read N- to C-terminus: MGFRLSHLSLALSFVALALAGVAIYRNTYEAIIMKNGSLLKNVSPDFDSLESGVASILTLNNNKKRNSDKYLRQQLTPEACVFSAVRAVVDSAIDAETRMGASLIRLHFHDCFVDGCDGGILLDDINGTFTGEQNSPPNANSARGYEVIAQAKQSVINTCPNVSVSCADILAIAARDSVAKLGGQTYSVALGRSDARTANFSGAINQLPAPFDNLTVQIQKFSDKNFTLREMVALAGAHTVGFARCSTVCTSGNVNPAAQLQCNCSATLTDSDLQQLDTTPTMFDKVYYDNLNSNQGIMFSDQVLTGDATTAGFVTDYSNDVNVFLGDFAAAMIKMGDLPPSAGAQLEIRDVCSRVNPTSVASM.

Residues 1–25 form the signal peptide; the sequence is MGFRLSHLSLALSFVALALAGVAIY. Asn-36 is a glycosylation site (N-linked (GlcNAc...) asparagine). 2 disulfide bridges follow: Cys-81/Cys-160 and Cys-112/Cys-117. His-110 (proton acceptor) is an active-site residue. Ca(2+) is bound by residues Asp-111, Val-114, Gly-116, and Asp-118. Asn-127, Asn-162, and Asn-200 each carry an N-linked (GlcNAc...) asparagine glycan. Disulfide bonds link Cys-167–Cys-353 and Cys-246–Cys-265. Pro-209 provides a ligand contact to substrate. Residues Asn-214 and Asn-226 are each glycosylated (N-linked (GlcNAc...) asparagine). His-239 provides a ligand contact to heme b. Thr-240 serves as a coordination point for Ca(2+). Residue Asn-264 is glycosylated (N-linked (GlcNAc...) asparagine). Asp-278, Thr-280, and Asp-285 together coordinate Ca(2+).

Belongs to the peroxidase family. Classical plant (class III) peroxidase subfamily. The cofactor is Ca(2+). Requires heme b as cofactor.

It localises to the secreted. It catalyses the reaction 2 a phenolic donor + H2O2 = 2 a phenolic radical donor + 2 H2O. In terms of biological role, removal of H(2)O(2), oxidation of toxic reductants, biosynthesis and degradation of lignin, suberization, auxin catabolism, response to environmental stresses such as wounding, pathogen attack and oxidative stress. These functions might be dependent on each isozyme/isoform in each plant tissue. Functionally, suggested to catalyze the deposition of the aromatic residues of suberin on the cell wall and thus play a role in cell-suberization. In Solanum lycopersicum (Tomato), this protein is Suberization-associated anionic peroxidase 1 (TAP1).